Reading from the N-terminus, the 472-residue chain is Ribulose bisphosphate carboxylase large chain (472 aa).

2 residues coordinate substrate: Asn120 and Thr170. Lys172 (proton acceptor) is an active-site residue. Lys174 provides a ligand contact to substrate. The Mg(2+) site is built by Lys198, Asp200, and Glu201. Lys198 bears the N6-carboxylysine mark. The active-site Proton acceptor is His291. Substrate is bound by residues Arg292, His324, and Ser376. The Interacts with RbcX2 motif lies at Glu461 to Glu467.

Belongs to the RuBisCO large chain family. Type I subfamily. As to quaternary structure, heterohexadecamer of 8 large chains and 8 small chains; disulfide-linked. The disulfide link is formed within the large subunit homodimers. The exposed C-terminus binds in a cleft in the RbcX2 (shown with endogenous and Anabaena strain CA protein). RbcX2 is displaced by RbcS; as RbcX2 is removed RbcS mediates the ordering of an internal RbcL loop (Thr-64-Leu-70) in a catalytically active conformation. Requires Mg(2+) as cofactor. The disulfide bond which can form in the large chain dimeric partners within the hexadecamer appears to be associated with oxidative stress and protein turnover.

The protein resides in the carboxysome. The enzyme catalyses 2 (2R)-3-phosphoglycerate + 2 H(+) = D-ribulose 1,5-bisphosphate + CO2 + H2O. The catalysed reaction is D-ribulose 1,5-bisphosphate + O2 = 2-phosphoglycolate + (2R)-3-phosphoglycerate + 2 H(+). RuBisCO catalyzes two reactions: the carboxylation of D-ribulose 1,5-bisphosphate, the primary event in carbon dioxide fixation, as well as the oxidative fragmentation of the pentose substrate in the photorespiration process. Both reactions occur simultaneously and in competition at the same active site. In Synechococcus sp. (strain ATCC 27144 / PCC 6301 / SAUG 1402/1) (Anacystis nidulans), this protein is Ribulose bisphosphate carboxylase large chain (cbbL).